Consider the following 1127-residue polypeptide: MASSSSSSSRNWSYHVFPSFSGEDVRNTFLSHFLKELDRKLIISFKDNEIERSQSLDPELKHGIRNSRIAVVVFSKTYASSSWCLNELLEIVKCKKEFGQLVIPIFYNLDPSHVRKQTGDFGKIFEKTCRNKTVDEKIRWKEALTDVANILGYHIVTWDNEASMIEEIANDILGKMNISPSNDFEDLVGIEDHITKMSSLLHLESEEVRMVGIWGPSGIGKTTIARALFSRLSCQFQSSVFIDKVFISKSMEVYSGANLVDYNMKLHLQRAFLAEIFDKKDIKIHVGAMEKMVKHRKALIVIDDLDDQDVLDALADQTQWFGSGSRIIVVTENKHFLRANRIDHIYKVCLPSNALALEMFCRSAFKKNSPPDDFLELSSEVALRAGNLPLGLNVLGSNLRGINKGYWIDMLPRLQGLDGKIGKTLRVSYDGLNNRKDEAIFRHIACIFNGEKVSDIKLLLANSNLDVNIGLKNLVDRSLICERFNTLEMHSLLQELGKEIVRTQSNQPGEREFLVDLKDICDVLEHNTGTKKVLGITLDIDETDELHIHESSFKGMHNLLFLKIYTKKLDQKKKVRWHLPERFDYLPSRLRLLRFDRYPSKCLPSNFHPENLVKLQMQQSKLEKLWDGVHSLAGLRNMDLRGSRNLKEIPDLSMATNLETLKLSSCSSLVELPSSIQYLNKLNDLDMSYCDHLETIPSGVNLKSLDRLNLSGCSRLKSFLDIPTNISWLDIGQTADIPSNLRLQNLDELILCERVQLRTPLMTMLSPTLTRLTFSNNPSFVEVPSSIQNLYQLEHLEIMNCRNLVTLPTGINLDSLISLDLSHCSQLKTFPDISTNISDLNLSYTAIEEVPLSIEKLSLLCYLDMNGCSNLLCVSPNISKLKHLERADFSDCVELTEASWNGSSSEMVKLLPADNFSTVKLNFINCFKLDLTALIQNQTFFMQLILTGEEVPSYFTHRTSGDSISLPHISVCQSFFSFRGCTVIDVDSFSTISVSFDIEVCCRFIDRFGNHFDSTDFPGYFITTKLGGHLVVFDCYFPFNEEFTTFLDGQFNYDHVDIQFRLTNDNSQLKLKGCGILLSEDVPSLDNRPCSPNILPGVCEDSALERRSFRTKMRMMRMRLLKKLLNR.

Met-1 bears the N-acetylmethionine mark. The TIR domain occupies 12 to 176 (WSYHVFPSFS…EIANDILGKM (165 aa)). The active site involves Glu-87. One can recognise an NB-ARC domain in the interval 191 to 452 (EDHITKMSSL…HIACIFNGEK (262 aa)). LRR repeat units follow at residues 197–221 (MSSL…GIGK), 540–563 (IDET…LFLK), 587–609 (PSRL…NFHP), 610–632 (ENLV…VHSL), 633–656 (AGLR…SMAT), 658–679 (LETL…IQYL), 680–704 (NKLN…NLKS), 766–790 (SPTL…IQNL), 791–813 (YQLE…GINL), 814–834 (DSLI…PDIS), and 835–857 (TNIS…IEKL).

In terms of assembly, interacts with EDS1. Ubiquitous.

The enzyme catalyses NAD(+) + H2O = ADP-D-ribose + nicotinamide + H(+). Disease resistance (R) protein that specifically recognizes the hopA1 type III effector avirulence protein from Pseudomonas syringae. Resistance proteins guard the plant against pathogens that contain an appropriate avirulence protein via an indirect interaction with this avirulence protein. That triggers a defense system including the hypersensitive response, which restricts the pathogen growth. This chain is Disease resistance protein RPS6 (RPS6), found in Arabidopsis thaliana (Mouse-ear cress).